The primary structure comprises 660 residues: Long chain acyl-CoA synthetase 1 (660 aa).

225-236 (IMYTSGTSGDPK) is a binding site for ATP. Positions 492 to 516 (DGWFHTGDIGEILPNGVLKIIDRKK) are fatty acid-binding.

Belongs to the ATP-dependent AMP-binding enzyme family. The cofactor is Mg(2+). Epidermal-specific expression along the entire stem. In cauline leaves, was expressed over the entire leaf surface, most strongly in trichomes and guard cells, but not in mesophyll cells. In flowers, the expression was detected in the stigma and filaments of the stamens, and in the carpel was expressed specifically in ovaries. In roots, was expressed in primary and lateral roots, but not in the root tips.

It is found in the endoplasmic reticulum. It carries out the reaction a long-chain fatty acid + ATP + CoA = a long-chain fatty acyl-CoA + AMP + diphosphate. Its pathway is lipid metabolism; fatty acid metabolism. Activation of long-chain fatty acids for both synthesis of cellular lipids, and degradation via beta-oxidation. Acts in both the wax and cutin pathways. Preferentially uses palmitate, palmitoleate, linoleate and eicosenoate. Seems to have a specific activity against very long-chain fatty acid (VLCFA) class with acids longer than 24 carbons (C(24)). This Arabidopsis thaliana (Mouse-ear cress) protein is Long chain acyl-CoA synthetase 1 (LACS1).